A 305-amino-acid chain; its full sequence is MKSHSAKSLSVEEATFSHLPVLPQEVVTGLAVRSGGHYLDATVGGGGHSRLILEAAPDVRLTAVDQDGDALTAAKKELAEFGEQVKFVRSNFAAYEFPVASFDGVLADLGVSSYHLDTPERGFSFRHQANLDMRMDQRQSLSAADVINDWDEVELANIFFKYGEERLSRRIARRIVEKRPFHTTTELAEAIASSVPPKYRYARIHPATRVFQALRIVVNDELKSLETFLEKAPKALVPGGRIAIISFHSLEDRLVKHGLRNSPSLKVLTKKPIIATEAEIANNPRSRSAKLRIAEKKAEMGQEDN.

Residues 46–48 (GGH), D65, F92, D108, and H115 contribute to the S-adenosyl-L-methionine site.

The protein belongs to the methyltransferase superfamily. RsmH family.

Its subcellular location is the cytoplasm. The catalysed reaction is cytidine(1402) in 16S rRNA + S-adenosyl-L-methionine = N(4)-methylcytidine(1402) in 16S rRNA + S-adenosyl-L-homocysteine + H(+). In terms of biological role, specifically methylates the N4 position of cytidine in position 1402 (C1402) of 16S rRNA. The polypeptide is Ribosomal RNA small subunit methyltransferase H (Trichormus variabilis (strain ATCC 29413 / PCC 7937) (Anabaena variabilis)).